A 489-amino-acid chain; its full sequence is Mitochondrial distribution and morphology protein 34 (489 aa).

The 205-residue stretch at 1-205 folds into the SMP-LTD domain; the sequence is MSFNINWDSI…LPSVLYKFSQ (205 aa).

Belongs to the MDM34 family. Component of the ER-mitochondria encounter structure (ERMES) or MDM complex, composed of MMM1, MDM10, MDM12 and MDM34.

The protein localises to the mitochondrion outer membrane. Component of the ERMES/MDM complex, which serves as a molecular tether to connect the endoplasmic reticulum (ER) and mitochondria. Components of this complex are involved in the control of mitochondrial shape and protein biogenesis, and function in nonvesicular lipid trafficking between the ER and mitochondria. MDM34 is required for the interaction of the ER-resident membrane protein MMM1 and the outer mitochondrial membrane-resident beta-barrel protein MDM10. The chain is Mitochondrial distribution and morphology protein 34 from Komagataella phaffii (strain GS115 / ATCC 20864) (Yeast).